A 514-amino-acid chain; its full sequence is 2-isopropylmalate synthase (514 aa).

A Pyruvate carboxyltransferase domain is found at 5–268; it reads LIIFDTTLRD…DVGIDTSQIV (264 aa). Residues Asp-14, His-202, His-204, and Asn-239 each coordinate Mn(2+). Residues 395–514 are regulatory domain; that stretch reads KFVSLSQRSE…KDDKVNPQRS (120 aa).

It belongs to the alpha-IPM synthase/homocitrate synthase family. LeuA type 1 subfamily. Homodimer. Requires Mn(2+) as cofactor.

The protein localises to the cytoplasm. It carries out the reaction 3-methyl-2-oxobutanoate + acetyl-CoA + H2O = (2S)-2-isopropylmalate + CoA + H(+). The protein operates within amino-acid biosynthesis; L-leucine biosynthesis; L-leucine from 3-methyl-2-oxobutanoate: step 1/4. Functionally, catalyzes the condensation of the acetyl group of acetyl-CoA with 3-methyl-2-oxobutanoate (2-ketoisovalerate) to form 3-carboxy-3-hydroxy-4-methylpentanoate (2-isopropylmalate). The protein is 2-isopropylmalate synthase of Burkholderia cenocepacia (strain ATCC BAA-245 / DSM 16553 / LMG 16656 / NCTC 13227 / J2315 / CF5610) (Burkholderia cepacia (strain J2315)).